A 476-amino-acid polypeptide reads, in one-letter code: Aspartyl/glutamyl-tRNA(Asn/Gln) amidotransferase subunit B (476 aa).

The protein belongs to the GatB/GatE family. GatB subfamily. As to quaternary structure, heterotrimer of A, B and C subunits.

It carries out the reaction L-glutamyl-tRNA(Gln) + L-glutamine + ATP + H2O = L-glutaminyl-tRNA(Gln) + L-glutamate + ADP + phosphate + H(+). The enzyme catalyses L-aspartyl-tRNA(Asn) + L-glutamine + ATP + H2O = L-asparaginyl-tRNA(Asn) + L-glutamate + ADP + phosphate + 2 H(+). In terms of biological role, allows the formation of correctly charged Asn-tRNA(Asn) or Gln-tRNA(Gln) through the transamidation of misacylated Asp-tRNA(Asn) or Glu-tRNA(Gln) in organisms which lack either or both of asparaginyl-tRNA or glutaminyl-tRNA synthetases. The reaction takes place in the presence of glutamine and ATP through an activated phospho-Asp-tRNA(Asn) or phospho-Glu-tRNA(Gln). This Neisseria meningitidis serogroup C / serotype 2a (strain ATCC 700532 / DSM 15464 / FAM18) protein is Aspartyl/glutamyl-tRNA(Asn/Gln) amidotransferase subunit B.